A 378-amino-acid chain; its full sequence is Erythronate-4-phosphate dehydrogenase (378 aa).

Ser-45 and Thr-66 together coordinate substrate. The NAD(+) site is built by Asp-146 and Thr-175. Arg-208 is a catalytic residue. Asp-232 serves as a coordination point for NAD(+). Residue Glu-237 is part of the active site. The active-site Proton donor is His-254. Gly-257 is an NAD(+) binding site. Tyr-258 lines the substrate pocket.

It belongs to the D-isomer specific 2-hydroxyacid dehydrogenase family. PdxB subfamily. Homodimer.

It localises to the cytoplasm. The catalysed reaction is 4-phospho-D-erythronate + NAD(+) = (R)-3-hydroxy-2-oxo-4-phosphooxybutanoate + NADH + H(+). It participates in cofactor biosynthesis; pyridoxine 5'-phosphate biosynthesis; pyridoxine 5'-phosphate from D-erythrose 4-phosphate: step 2/5. Its function is as follows. Catalyzes the oxidation of erythronate-4-phosphate to 3-hydroxy-2-oxo-4-phosphonooxybutanoate. This is Erythronate-4-phosphate dehydrogenase from Shigella flexneri serotype 5b (strain 8401).